The sequence spans 90 residues: Aminoacyl carrier protein 1 (90 aa).

In terms of domain architecture, Carrier spans 6–84; it reads TDVRNRIIKL…TLERMVMTQL (79 aa). Ser-42 carries the O-(pantetheine 4'-phosphoryl)serine modification.

4'-phosphopantetheine is transferred from CoA to a specific serine of the apo-form of this carrier protein.

Aminoacyl carrier protein. Can be charged with L-glycine via the formation of a thioester bond between the amino acid and the 4'-phosphopantetheinyl prosthetic group, catalyzed by the bll0957 ligase. This Bradyrhizobium diazoefficiens (strain JCM 10833 / BCRC 13528 / IAM 13628 / NBRC 14792 / USDA 110) protein is Aminoacyl carrier protein 1.